Consider the following 201-residue polypeptide: Recombination protein RecR (201 aa).

The C4-type zinc finger occupies Cys60–Cys75. The Toprim domain maps to Thr83–Pro178.

The protein belongs to the RecR family.

May play a role in DNA repair. It seems to be involved in an RecBC-independent recombinational process of DNA repair. It may act with RecF and RecO. In Brucella anthropi (strain ATCC 49188 / DSM 6882 / CCUG 24695 / JCM 21032 / LMG 3331 / NBRC 15819 / NCTC 12168 / Alc 37) (Ochrobactrum anthropi), this protein is Recombination protein RecR.